A 320-amino-acid chain; its full sequence is tRNA-cytidine(32) 2-sulfurtransferase (320 aa).

The short motif at 54-59 is the PP-loop motif element; sequence SGGKDS. [4Fe-4S] cluster-binding residues include C129, C132, and C220.

Belongs to the TtcA family. In terms of assembly, homodimer. Requires Mg(2+) as cofactor. [4Fe-4S] cluster is required as a cofactor.

The protein resides in the cytoplasm. The enzyme catalyses cytidine(32) in tRNA + S-sulfanyl-L-cysteinyl-[cysteine desulfurase] + AH2 + ATP = 2-thiocytidine(32) in tRNA + L-cysteinyl-[cysteine desulfurase] + A + AMP + diphosphate + H(+). Its pathway is tRNA modification. Functionally, catalyzes the ATP-dependent 2-thiolation of cytidine in position 32 of tRNA, to form 2-thiocytidine (s(2)C32). The sulfur atoms are provided by the cysteine/cysteine desulfurase (IscS) system. This chain is tRNA-cytidine(32) 2-sulfurtransferase, found in Bordetella bronchiseptica (strain ATCC BAA-588 / NCTC 13252 / RB50) (Alcaligenes bronchisepticus).